A 127-amino-acid chain; its full sequence is Small ribosomal subunit protein bS6 (127 aa).

Basic and acidic residues predominate over residues 106 to 117 (ERKAQSEKKEAE). The interval 106–127 (ERKAQSEKKEAEVSEGEGGTEA) is disordered. Positions 118 to 127 (VSEGEGGTEA) are enriched in acidic residues.

Belongs to the bacterial ribosomal protein bS6 family.

In terms of biological role, binds together with bS18 to 16S ribosomal RNA. This Thermotoga neapolitana (strain ATCC 49049 / DSM 4359 / NBRC 107923 / NS-E) protein is Small ribosomal subunit protein bS6.